We begin with the raw amino-acid sequence, 576 residues long: Arginine--tRNA ligase (576 aa).

A 'HIGH' region motif is present at residues proline 122 to histidine 132.

This sequence belongs to the class-I aminoacyl-tRNA synthetase family. In terms of assembly, monomer.

It localises to the cytoplasm. The enzyme catalyses tRNA(Arg) + L-arginine + ATP = L-arginyl-tRNA(Arg) + AMP + diphosphate. This chain is Arginine--tRNA ligase, found in Pectobacterium atrosepticum (strain SCRI 1043 / ATCC BAA-672) (Erwinia carotovora subsp. atroseptica).